A 345-amino-acid polypeptide reads, in one-letter code: Nuclear egress protein 1 (345 aa).

The CCCH-type zinc-finger motif lies at 115 to 247 (CISLSEMGYT…FVFKPGSPLH (133 aa)).

This sequence belongs to the herpesviridae NEC1 protein family. In terms of assembly, forms a heterohexameric complex with NEC2. Interacts with capsid vertex specific component 2/CVC2; this interaction directs the capsid to the host inner nuclear membrane to initiate budding. Post-translationally, phosphorylated at serine residues in the N-terminus. This phosphorylation regulates the localization within the inner nuclear membrane.

The protein resides in the host nucleus inner membrane. Functionally, plays an essential role in virion nuclear egress, the first step of virion release from infected cell. Within the host nucleus, NEC1 interacts with the newly formed capsid through the vertexes and directs it to the inner nuclear membrane by associating with NEC2. Induces the budding of the capsid at the inner nuclear membrane as well as its envelopment into the perinuclear space. There, the NEC1/NEC2 complex promotes the fusion of the enveloped capsid with the outer nuclear membrane and the subsequent release of the viral capsid into the cytoplasm where it will reach the secondary budding sites in the host Golgi or trans-Golgi network. The chain is Nuclear egress protein 1 from Psittacid herpesvirus 1 (isolate Amazon parrot/-/97-0001/1997) (PsHV-1).